Reading from the N-terminus, the 427-residue chain is Adenylosuccinate synthetase (427 aa).

Residues 12-18 (GDEGKGK) and 40-42 (GHT) contribute to the GTP site. Asp13 (proton acceptor) is an active-site residue. Positions 13 and 40 each coordinate Mg(2+). IMP contacts are provided by residues 13-16 (DEGK), 38-41 (NAGH), Thr127, Arg141, Gln222, Thr237, and Arg301. His41 functions as the Proton donor in the catalytic mechanism. 297 to 303 (VVTKRPR) lines the substrate pocket. GTP contacts are provided by residues Arg303, 329–331 (SLD), and 411–413 (AVG).

Belongs to the adenylosuccinate synthetase family. Homodimer. The cofactor is Mg(2+).

The protein localises to the cytoplasm. It catalyses the reaction IMP + L-aspartate + GTP = N(6)-(1,2-dicarboxyethyl)-AMP + GDP + phosphate + 2 H(+). It functions in the pathway purine metabolism; AMP biosynthesis via de novo pathway; AMP from IMP: step 1/2. Plays an important role in the de novo pathway of purine nucleotide biosynthesis. Catalyzes the first committed step in the biosynthesis of AMP from IMP. This Leuconostoc mesenteroides subsp. mesenteroides (strain ATCC 8293 / DSM 20343 / BCRC 11652 / CCM 1803 / JCM 6124 / NCDO 523 / NBRC 100496 / NCIMB 8023 / NCTC 12954 / NRRL B-1118 / 37Y) protein is Adenylosuccinate synthetase.